The following is a 535-amino-acid chain: Heparanase (535 aa).

The first 27 residues, 1–27, serve as a signal peptide directing secretion; that stretch reads MLRLLLLWLWGPLGALAQGAPAGTAPT. Residues 54–56 and Thr89 contribute to the heparan sulfate group site; that span reads DAS. Positions 102–149 are cleaved as a propeptide — linker peptide; sequence PTSEERSYWKSQVNHDICRSEPVSAAVLRKLQVEWPFQELLLLREQYQ. A disulfide bridge connects residues Cys119 and Cys171. 150–154 contributes to the heparan sulfate group binding site; the sequence is KEFKN. N-linked (GlcNAc...) asparagine glycans are attached at residues Asn192 and Asn209. Catalysis depends on Glu217, which acts as the Proton donor. Residues 262–272, His288, and Arg295 each bind heparan sulfate group; that span reads QPRGKTVKLLR. The interval 280-409 is required for heterodimerization with the heparanase 8 kDa subunit; it reads EVIDSLTWHH…LLFKKLVGPR (130 aa). The active-site Nucleophile is the Glu335. Heparan sulfate group is bound by residues 340 to 342 and 381 to 383; these read YGG and GNY. Cys429 and Cys534 are oxidised to a cystine. An N-linked (GlcNAc...) asparagine glycan is attached at Asn451. The segment at 519–535 is required for transferring proheparanase to the Golgi apparatus, secretion and subsequent enzyme activity and for enhancement of PKB/AKT1 phosphorylation; that stretch reads FSYGFFVIRNAKIAACI.

This sequence belongs to the glycosyl hydrolase 79 family. In terms of assembly, heterodimer; heterodimer formation between the 8 kDa and the 50 kDa subunits is required for enzyme activity. Interacts with TF; the interaction, inhibited by heparin, enhances the generation of activated factor X and activates coagulation. Interacts with HRG; the interaction is enhanced at acidic pH, partially inhibits binding of HPSE to cell surface receptors and modulates its enzymatic activity. Interacts with SDC1; the interaction enhances the shedding of SDC1. Interacts with HPSE2. Proteolytically processed. The cleavage of the 65 kDa form leads to the generation of a linker peptide, and the 8 kDa and 50 kDa products. The active form, the 8/50 kDa heterodimer, is resistant to degradation. Complete removal of the linker peptide appears to be a prerequisite to the complete activation of the enzyme. Post-translationally, N-glycosylated. Glycosylation of the 50 kDa subunit appears to be essential for its solubility. In terms of tissue distribution, expressed in skin, mainly in the stratum granulosum and the first layer of the stratum corneum in the upper part of the epidermis. Also detected in hair follicles and in sebaceous glands.

It is found in the lysosome membrane. The protein localises to the secreted. The protein resides in the nucleus. It carries out the reaction endohydrolysis of (1-&gt;4)-beta-D-glycosidic bonds of heparan sulfate chains in heparan sulfate proteoglycan.. With respect to regulation, inhibited by EDTA and activated by calcium and magnesium. Inhibited by laminarin sulfate and, to a lower extent, by heparin and sulfamin. Its function is as follows. Endoglycosidase that cleaves heparan sulfate proteoglycans (HSPGs) into heparan sulfate side chains and core proteoglycans. Participates in extracellular matrix (ECM) degradation and remodeling. Selectively cleaves the linkage between a glucuronic acid unit and an N-sulfo glucosamine unit carrying either a 3-O-sulfo or a 6-O-sulfo group. Can also cleave the linkage between a glucuronic acid unit and an N-sulfo glucosamine unit carrying a 2-O-sulfo group, but not linkages between a glucuronic acid unit and a 2-O-sulfated iduronic acid moiety. It is essentially inactive at neutral pH but becomes active under acidic conditions such as during tumor invasion and in inflammatory processes. Facilitates cell migration associated with metastasis, wound healing and inflammation. Enhances shedding of syndecans, and increases endothelial invasion and angiogenesis in myelomas. Acts as a procoagulant by increasing the generation of activation factor X in the presence of tissue factor and activation factor VII. Increases cell adhesion to the extracellular matrix (ECM), independent of its enzymatic activity. Induces AKT1/PKB phosphorylation via lipid rafts increasing cell mobility and invasion. Heparin increases this AKT1/PKB activation. Regulates osteogenesis. Enhances angiogenesis through up-regulation of SRC-mediated activation of VEGF. Implicated in hair follicle inner root sheath differentiation and hair homeostasis. The chain is Heparanase (Hpse) from Mus musculus (Mouse).